The chain runs to 429 residues: Glutamate-1-semialdehyde 2,1-aminomutase 2 (429 aa).

K268 is modified (N6-(pyridoxal phosphate)lysine).

It belongs to the class-III pyridoxal-phosphate-dependent aminotransferase family. HemL subfamily. Homodimer. The cofactor is pyridoxal 5'-phosphate.

Its subcellular location is the cytoplasm. The enzyme catalyses (S)-4-amino-5-oxopentanoate = 5-aminolevulinate. It functions in the pathway porphyrin-containing compound metabolism; protoporphyrin-IX biosynthesis; 5-aminolevulinate from L-glutamyl-tRNA(Glu): step 2/2. This is Glutamate-1-semialdehyde 2,1-aminomutase 2 from Listeria monocytogenes serotype 4a (strain HCC23).